The following is a 769-amino-acid chain: Serine protease HtrA-like (769 aa).

Over residues 1-20 the composition is skewed to basic residues; sequence MDIGKKHVIPKSQYRRKRRE. The tract at residues 1–388 is disordered; that stretch reads MDIGKKHVIP…KKATSKLNKG (388 aa). Basic and acidic residues-rich tracts occupy residues 21–64, 71–87, and 96–108; these read FFHN…ERFK, LEQR…EESK, and YNKD…DVSK. Positions 126 to 139 are enriched in polar residues; the sequence is YEQNTEATLSTNST. The segment covering 140-186 has biased composition (basic and acidic residues); that stretch reads DKVESTDMRKLSSDKNKVGHEEQHVLSKPSEHDKETRIDFESSRTDS. Over residues 247-262 the composition is skewed to polar residues; it reads QQSQNEQTKTYTYGDS. 2 stretches are compositionally biased toward basic and acidic residues: residues 264–296 and 310–330; these read QNDK…HIVD and KIDD…HKQN. The span at 331–347 shows a compositional bias: polar residues; that stretch reads ADSSETVGYQSQSSASH. Residues 348–364 show a composition bias toward basic and acidic residues; the sequence is RSTEKRNMAINDHDKLN. The segment covering 366–388 has biased composition (polar residues); it reads QKPNTKTSANNNQKKATSKLNKG. The chain crosses the membrane as a helical span at residues 410–430; it reads LVILMGIIILIVILNAIFNNV. Catalysis depends on charge relay system residues His504, Asp534, and Ser619. Residues 680-733 form the PDZ domain; it reads IASLNSFERQAVKLLGKVKNGVVVDQVDNNGLADQSGLKKGDVITELDGKLLED.

The protein belongs to the peptidase S1C family.

It localises to the cell membrane. This is Serine protease HtrA-like from Staphylococcus aureus (strain MRSA252).